A 996-amino-acid polypeptide reads, in one-letter code: Receptor-like protein kinase HSL1 (996 aa).

The N-terminal stretch at 1 to 15 is a signal peptide; the sequence is MYLLFLFLLFPTVFS. Residues 16 to 618 lie on the Extracellular side of the membrane; the sequence is LNQDGFILQQ…ENEAKKRGYV (603 aa). LRR repeat units follow at residues 59–83, 84–107, 109–131, 133–154, 155–178, 179–203, 205–228, 229–252, 253–276, 278–299, 300–323, 325–347, 348–371, 373–395, 396–419, 421–443, 444–467, 468–491, 493–515, 516–539, 541–562, and 563–586; these read FSSVTSVDLSSANLAGPFPSVICRL, SNLAHLSLYNNSINSTLPLNIAAC, SLQTLDLSQNLLTGELPQTLADI, TLVHLDLTGNNFSGDIPASFGK, FENLEVLSLVYNLLDGTIPPFLGN, ISTLKMLNLSYNPFSPSRIPPEFGN, TNLEVMWLTECHLVGQIPDSLGQL, SKLVDLDLALNDLVGHIPPSLGGL, TNVVQIELYNNSLTGEIPPELGNL, SLRLLDASMNQLTGKIPDELCR, VPLESLNLYENNLEGELPASIALS, NLYEIRIFGNRLTGGLPKDLGLN, SPLRWLDVSENEFSGDLPADLCAK, ELEELLIIHNSFSGVIPESLADC, RSLTRIRLAYNRFSGSVPTGFWGL, HVNLLELVNNSFSGEISKSIGGA, SNLSLLILSNNEFTGSLPEEIGSL, DNLNQLSASGNKFSGSLPDSLMSL, ELGTLDLHGNQFSGELTSGIKSW, KKLNELNLADNEFTGKIPDEIGSL, VLNYLDLSGNMFSGKIPVSLQS, and LKLNQLNLSYNRLSGDLPPSLAKD. N-linked (GlcNAc...) asparagine glycans are attached at residues Asn93 and Asn97. 4 N-linked (GlcNAc...) asparagine glycosylation sites follow: Asn143, Asn178, Asn186, and Asn203. A glycan (N-linked (GlcNAc...) asparagine) is linked at Asn262. Residues Asn429 and Asn445 are each glycosylated (N-linked (GlcNAc...) asparagine). Residue Asn569 is glycosylated (N-linked (GlcNAc...) asparagine). The chain crosses the membrane as a helical span at residues 619–639; that stretch reads WLLRSIFVLAAMVLLAGVAWF. Over 640–996 the chain is Cytoplasmic; the sequence is YFKYRTFKKA…EDTSDQGSIA (357 aa). In terms of domain architecture, Protein kinase spans 676-962; it reads LDEDNVIGAG…RRVVKMLQEI (287 aa). ATP-binding positions include 682 to 690 and Lys704; that span reads IGAGASGKV. Residues Tyr764 and Tyr802 each carry the phosphotyrosine modification. Catalysis depends on Asp815, which acts as the Proton acceptor. Ser851 bears the Phosphoserine mark. Tyr859 and Tyr866 each carry phosphotyrosine. The residue at position 867 (Thr867) is a Phosphothreonine. The disordered stretch occupies residues 967 to 996; sequence EDSLHKIRDDKDGKLTPYYNEDTSDQGSIA. Over residues 968–980 the composition is skewed to basic and acidic residues; the sequence is DSLHKIRDDKDGK.

Belongs to the protein kinase superfamily. Ser/Thr protein kinase family.

The protein localises to the cell membrane. The enzyme catalyses L-seryl-[protein] + ATP = O-phospho-L-seryl-[protein] + ADP + H(+). It catalyses the reaction L-threonyl-[protein] + ATP = O-phospho-L-threonyl-[protein] + ADP + H(+). This is Receptor-like protein kinase HSL1 (HSL1) from Arabidopsis thaliana (Mouse-ear cress).